The primary structure comprises 391 residues: Putative F-box protein At1g47730 (391 aa).

Over residues 1-12 the composition is skewed to basic and acidic residues; sequence MEQREEKTENIQ. Residues 1–25 form a disordered region; that stretch reads MEQREEKTENIQRKRSRGKSSSSSL. The F-box domain maps to 19–68; the sequence is KSSSSSLPLDLTSEIFSRLPAKSVVRFRCVSKLWSSITTAPYFTNSFETR.

The protein is Putative F-box protein At1g47730 of Arabidopsis thaliana (Mouse-ear cress).